A 239-amino-acid polypeptide reads, in one-letter code: Non-structural protein V (239 aa).

2 disordered regions span residues 30-104 (PVET…ADEA) and 126-180 (NKSS…HRRE). Residues 65 to 74 (TPDRQDRSDK) are compositionally biased toward basic and acidic residues. 2 stretches are compositionally biased toward polar residues: residues 89 to 98 (PATSTDQPPT) and 143 to 153 (ASSTSDSTAGE). Zn(2+) contacts are provided by His177, Cys196, Cys200, Cys212, Cys214, Cys217, Cys221, and Cys224.

In terms of assembly, interacts with host STAT1. Interacts with host TXNL1. Interacts (via C-terminus) with host CacyBP; this interaction inhibits host cell apoptosis.

The protein localises to the host cytoplasm. The protein resides in the host nucleus. Protects the virus against cell antiviral state by blocking host interferon signaling. Mechanistically, targets host phosphorylated STAT1 (phospho-STAT1) for degradation, thereby inhibiting the interferon alpha signaling pathway. Plays a role in the inhibition of host apoptosis. Interacts with and down-regulates the expression of host TXNL1. In turn, inhibits TXNL1-induced apoptosis through the BCL2-BAX-caspase 3 pathway. Inhibits host apoptosis also by negatively regulating host CacyBP/SIP. Promotes viral replication by activating the extracellular signal-regulated kinase (ERK) pathway. This chain is Non-structural protein V (P/V), found in Gallus gallus (Chicken).